We begin with the raw amino-acid sequence, 983 residues long: Inner tegument protein (983 aa).

Positions 474 to 983 (LNVNTHFAVQ…TSVSLPPASP (510 aa)) are interaction with large tegument protein. The tract at residues 901–932 (APWESAPQPPRLRMTPDTDHEESTAGATSVPE) is disordered. Basic and acidic residues predominate over residues 914–923 (MTPDTDHEES).

The protein belongs to the herpesviridae inner tegument protein family. As to quaternary structure, interacts (via C-terminus) with the large tegument protein/LTP (via N-terminus).

The protein resides in the virion tegument. It localises to the host cytoplasm. Its subcellular location is the host nucleus. It is found in the host Golgi apparatus. The protein localises to the host trans-Golgi network. Plays an essential role in cytoplasmic secondary envelopment during viral egress. Interacts with the capsid via the large tegument protein/LTP and participates in its transport to the host trans-Golgi network (TGN) where secondary envelopment occurs. Modulates tegumentation and capsid accumulation at the viral assembly complex. The protein is Inner tegument protein (UL47) of Homo sapiens (Human).